We begin with the raw amino-acid sequence, 158 residues long: NAD(P)H-quinone oxidoreductase subunit J, chloroplastic (158 aa).

It belongs to the complex I 30 kDa subunit family. NDH is composed of at least 16 different subunits, 5 of which are encoded in the nucleus.

It localises to the plastid. The protein localises to the chloroplast thylakoid membrane. The enzyme catalyses a plastoquinone + NADH + (n+1) H(+)(in) = a plastoquinol + NAD(+) + n H(+)(out). It carries out the reaction a plastoquinone + NADPH + (n+1) H(+)(in) = a plastoquinol + NADP(+) + n H(+)(out). NDH shuttles electrons from NAD(P)H:plastoquinone, via FMN and iron-sulfur (Fe-S) centers, to quinones in the photosynthetic chain and possibly in a chloroplast respiratory chain. The immediate electron acceptor for the enzyme in this species is believed to be plastoquinone. Couples the redox reaction to proton translocation, and thus conserves the redox energy in a proton gradient. This is NAD(P)H-quinone oxidoreductase subunit J, chloroplastic from Nymphaea alba (White water-lily).